A 115-amino-acid polypeptide reads, in one-letter code: Holo-[acyl-carrier-protein] synthase (115 aa).

Residues Asp-8 and Glu-50 each contribute to the Mg(2+) site.

Belongs to the P-Pant transferase superfamily. AcpS family. The cofactor is Mg(2+).

The protein localises to the cytoplasm. The catalysed reaction is apo-[ACP] + CoA = holo-[ACP] + adenosine 3',5'-bisphosphate + H(+). In terms of biological role, transfers the 4'-phosphopantetheine moiety from coenzyme A to a Ser of acyl-carrier-protein. The protein is Holo-[acyl-carrier-protein] synthase of Cutibacterium acnes (strain DSM 16379 / KPA171202) (Propionibacterium acnes).